A 382-amino-acid polypeptide reads, in one-letter code: UDP-N-acetylglucosamine--N-acetylmuramyl-(pentapeptide) pyrophosphoryl-undecaprenol N-acetylglucosamine transferase (382 aa).

UDP-N-acetyl-alpha-D-glucosamine contacts are provided by residues 11–13 (TGG), N117, R160, S209, and Q311.

The protein belongs to the glycosyltransferase 28 family. MurG subfamily.

It localises to the cell inner membrane. The enzyme catalyses di-trans,octa-cis-undecaprenyl diphospho-N-acetyl-alpha-D-muramoyl-L-alanyl-D-glutamyl-meso-2,6-diaminopimeloyl-D-alanyl-D-alanine + UDP-N-acetyl-alpha-D-glucosamine = di-trans,octa-cis-undecaprenyl diphospho-[N-acetyl-alpha-D-glucosaminyl-(1-&gt;4)]-N-acetyl-alpha-D-muramoyl-L-alanyl-D-glutamyl-meso-2,6-diaminopimeloyl-D-alanyl-D-alanine + UDP + H(+). It participates in cell wall biogenesis; peptidoglycan biosynthesis. Its function is as follows. Cell wall formation. Catalyzes the transfer of a GlcNAc subunit on undecaprenyl-pyrophosphoryl-MurNAc-pentapeptide (lipid intermediate I) to form undecaprenyl-pyrophosphoryl-MurNAc-(pentapeptide)GlcNAc (lipid intermediate II). This chain is UDP-N-acetylglucosamine--N-acetylmuramyl-(pentapeptide) pyrophosphoryl-undecaprenol N-acetylglucosamine transferase, found in Rickettsia akari (strain Hartford).